A 662-amino-acid polypeptide reads, in one-letter code: Probable quinol oxidase subunit 1 (662 aa).

2 helical membrane-spanning segments follow: residues 14-34 and 58-78; these read WMIT…IAVI and IMYL…ALLI. Fe(II)-heme a is bound at residue His102. A run of 8 helical transmembrane segments spans residues 103–123, 140–160, 187–207, 228–248, 273–293, 311–331, 336–356, and 376–396; these read GVIM…NIVV, VSFW…IIGG, IAIQ…FVTI, FITT…LALM, FFWV…FGIY, MVWA…HHFF, GALI…PTGV, and MLFS…GVML. Cu cation is bound by residues His279, Tyr283, His328, and His329. Residues 279 to 283 constitute a cross-link (1'-histidyl-3'-tyrosine (His-Tyr)); it reads HPEVY. His414 is a binding site for heme a3. A run of 5 helical transmembrane segments spans residues 415–435, 451–471, 493–513, 587–604, and 608–627; these read FHYT…IFWY, CFWF…ILGL, ISTI…VSIV, PVGF…FFLI, and VIPA…YRSF. His416 is a Fe(II)-heme a binding site.

The protein belongs to the heme-copper respiratory oxidase family. The cofactor is Cu cation. It depends on ferriheme a as a cofactor. Heme A3. serves as cofactor.

It is found in the cell membrane. It carries out the reaction 2 a quinol + O2 = 2 a quinone + 2 H2O. It functions in the pathway energy metabolism; oxidative phosphorylation. Its function is as follows. Catalyzes quinol oxidation with the concomitant reduction of oxygen to water. In Staphylococcus aureus (strain MRSA252), this protein is Probable quinol oxidase subunit 1 (qoxB).